The chain runs to 212 residues: Ribonuclease HII (212 aa).

An RNase H type-2 domain is found at 22-211 (GLVAGVDEVG…VADRILLQNT (190 aa)). A divalent metal cation is bound by residues aspartate 28, glutamate 29, and aspartate 120.

It belongs to the RNase HII family. Requires Mn(2+) as cofactor. Mg(2+) is required as a cofactor.

Its subcellular location is the cytoplasm. It catalyses the reaction Endonucleolytic cleavage to 5'-phosphomonoester.. In terms of biological role, endonuclease that specifically degrades the RNA of RNA-DNA hybrids. The protein is Ribonuclease HII of Shewanella frigidimarina (strain NCIMB 400).